The following is a 258-amino-acid chain: NAD kinase (258 aa).

Asp-51 functions as the Proton acceptor in the catalytic mechanism. NAD(+) is bound by residues 51-52, 119-120, Lys-130, Asp-149, 160-165, and Ala-184; these read DG, ND, and TAYSLS.

It belongs to the NAD kinase family. Homodimer. The cofactor is a divalent metal cation.

It localises to the cytoplasm. The catalysed reaction is NAD(+) + ATP = ADP + NADP(+) + H(+). Involved in the regulation of the intracellular balance between NAD(H) and NADP(H), and is a key enzyme in the biosynthesis of NADP. Catalyzes specifically the phosphorylation on 2'-hydroxyl of the adenosine moiety of NAD to yield NADP. This Thermotoga maritima (strain ATCC 43589 / DSM 3109 / JCM 10099 / NBRC 100826 / MSB8) protein is NAD kinase (NADK).